The chain runs to 828 residues: Beta-galactosidase 13 (828 aa).

The first 23 residues, 1 to 23 (MKTTMAAAATCLVALLVVVLAEA), serve as a signal peptide directing secretion. Residue Asn-157 is glycosylated (N-linked (GlcNAc...) asparagine). The active-site Proton donor is the Glu-187. N-linked (GlcNAc...) asparagine glycosylation is found at Asn-198 and Asn-249. The active-site Nucleophile is the Glu-259. Residues Asn-260, Asn-362, Asn-366, Asn-392, Asn-502, Asn-578, Asn-586, and Asn-615 are each glycosylated (N-linked (GlcNAc...) asparagine). Residues 746–828 (AEVGDAITLS…SGVLTVQASC (83 aa)) enclose the SUEL-type lectin domain.

The protein belongs to the glycosyl hydrolase 35 family.

The protein resides in the secreted. It localises to the extracellular space. Its subcellular location is the apoplast. It carries out the reaction Hydrolysis of terminal non-reducing beta-D-galactose residues in beta-D-galactosides.. The polypeptide is Beta-galactosidase 13 (Oryza sativa subsp. japonica (Rice)).